The sequence spans 413 residues: Transposon Ty4-H Gag polyprotein (413 aa).

Residues 39 to 115 are a coiled coil; sequence RKVSIKDEQV…IQLLETNENN (77 aa). The tract at residues 380–413 is disordered; sequence RQQQLKSSAKRTKVLEQDTKKVKQSVQQQKTGNY. Residues 403–413 show a composition bias toward low complexity; sequence QSVQQQKTGNY.

Its function is as follows. Capsid protein (CA) is the structural component of the virus-like particle (VLP), forming the shell that encapsulates the retrotransposons dimeric RNA genome. In Saccharomyces cerevisiae (strain ATCC 204508 / S288c) (Baker's yeast), this protein is Transposon Ty4-H Gag polyprotein (TY4A-H).